Reading from the N-terminus, the 33-residue chain is Non-specific lipid-transfer protein (33 aa).

An intrachain disulfide couples Cys-14 to Cys-29.

The protein belongs to the plant LTP family. Dimer.

Functionally, plant non-specific lipid-transfer proteins transfer phospholipids as well as galactolipids across membranes. May play a role in wax or cutin deposition in the cell walls of expanding epidermal cells and certain secretory tissues. Has antibacterial activity against Gram-positive bacteria S.aureus and S.epidermidis and blocks biofilm formation. In a mouse model, also protects against bacterial sepsis and has an anti-inflammatory effect. Exhibits antinociceptive activity upon oral or intraperitoneal application in mice. The protein is Non-specific lipid-transfer protein of Morinda citrifolia (Indian mulberry).